Here is an 812-residue protein sequence, read N- to C-terminus: INO80 complex subunit D (812 aa).

Disordered regions lie at residues 521 to 573 and 581 to 600; these read NSRK…LCMP and EVSS…ELPD. Residues 524–558 show a composition bias toward basic residues; sequence KVQHHQQRKPRKKTKPPALTKKTKKKRRRGPRRPQ. Residues 585 to 595 show a composition bias toward polar residues; that stretch reads IRSPSTPNLST.

It belongs to the INO80D family. In terms of assembly, component of the chromatin-remodeling INO80 complex.

Its subcellular location is the nucleus. Putative regulatory component of the chromatin remodeling INO80 complex which is involved in transcriptional regulation, DNA replication and probably DNA repair. The protein is INO80 complex subunit D of Xenopus laevis (African clawed frog).